The following is a 221-amino-acid chain: Orotate phosphoribosyltransferase (221 aa).

K26 serves as a coordination point for 5-phospho-alpha-D-ribose 1-diphosphate. 34 to 35 (FF) provides a ligand contact to orotate. 5-phospho-alpha-D-ribose 1-diphosphate is bound by residues 72-73 (YK), R98, K99, K102, H104, and 123-131 (DDVISAGTS). The orotate site is built by S127 and R155.

The protein belongs to the purine/pyrimidine phosphoribosyltransferase family. PyrE subfamily. Homodimer. It depends on Mg(2+) as a cofactor.

The enzyme catalyses orotidine 5'-phosphate + diphosphate = orotate + 5-phospho-alpha-D-ribose 1-diphosphate. It participates in pyrimidine metabolism; UMP biosynthesis via de novo pathway; UMP from orotate: step 1/2. Its function is as follows. Catalyzes the transfer of a ribosyl phosphate group from 5-phosphoribose 1-diphosphate to orotate, leading to the formation of orotidine monophosphate (OMP). In Janthinobacterium sp. (strain Marseille) (Minibacterium massiliensis), this protein is Orotate phosphoribosyltransferase.